The sequence spans 108 residues: uncharacterized protein (108 aa).

T56 bears the Phosphothreonine mark. Positions 89 to 108 are disordered; that stretch reads AQAKGTEQAEALKKGTSKWF.

It localises to the cytoplasm. This is an uncharacterized protein from Schizosaccharomyces pombe (strain 972 / ATCC 24843) (Fission yeast).